The chain runs to 399 residues: Protein phosphatase 2C 37 (399 aa).

Residues 104–389 (KIGTTSVCGR…DNVSVVVVDL (286 aa)) enclose the PPM-type phosphatase domain. Mn(2+) is bound by residues aspartate 142 and glycine 143. Residues cysteine 146, histidine 148, cysteine 208, and cysteine 210 each contribute to the Zn(2+) site. The Mn(2+) site is built by aspartate 327, aspartate 331, and aspartate 380.

Belongs to the PP2C family. Interacts with AKT2/AKT3. Interacts with ABA-bounded PYR1, PYL1, PYL2, PYL3, PYL4, PYL9 and PYL12, and with free PYL2, PYL3, PYL4 and PYL13. Binds to and inactivates SLAC1 and SRK2E. The inactivation of SRK2E does not require phosphatase activity. Interacts with CBL1, CBL2, CBL3, CBL5, and CBL7, but not CBL4, CBL6, and CBL9. Interacts with RGLG1 and RGLG5. Interacts with KIN10. The cofactor is Mg(2+). Mn(2+) serves as cofactor. In terms of processing, ubiquitinated by RGLG1 and RGLG5 in response to abscisic acid (ABA). Ubiquitination of PP2CA leads to its degradation by the proteasome. In terms of tissue distribution, mostly expressed in seeds and leaves, and, to a lower extent, in roots, stems, and flowers, particularly in siliques. Essentially found in the phloem.

It catalyses the reaction O-phospho-L-seryl-[protein] + H2O = L-seryl-[protein] + phosphate. It carries out the reaction O-phospho-L-threonyl-[protein] + H2O = L-threonyl-[protein] + phosphate. Its activity is regulated as follows. Repressed by PYR/PYL/RCAR ABA receptors in an ABA-dependent manner. In terms of biological role, major negative regulator of abscisic acid (ABA) responses during seed germination and cold acclimation. Confers insensitivity to ABA. Modulates negatively the AKT2/3 activity, which mediates K(+) transport and membrane polarization during stress situations, probably by dephosphorylation. Prevents stomata closure by inactivating the S-type anion efflux channel SLAC1 and its activator SRK2E. Represses KIN10 activity by the specific dephosphorylation of its T-loop Thr-198, leading to a poststress inactivation of SnRK1 signaling. This is Protein phosphatase 2C 37 (PP2CA) from Arabidopsis thaliana (Mouse-ear cress).